The primary structure comprises 388 residues: MALQLLPSTLSVPKKGSSMGAAAVKDTAAFLGVSSKAKKASLAVRTQVATAPSSVTTSPGSATAKPSGKKTLRQGVVVITGASSGLGLAAAKALAETGKWHVVMACRDFLKASKAAKAAGMADGSYTVMHLDLASLDSVRQFVDAFRRAEMPLDVLVCNAAIYRPTARTPTFTADGHEMSVGVNHLGHFLLARLLMEDLQKSDYPSRRMVIVGSITGNSNTLAGNVPPKASLGDLRGLAGGLSGASGSAMIDGDESFDGAKAYKDSKVCNMLTMQEFHRRYHEETGITFSSLYPGCIATTGLFREHIPLFRTLFPPFQKFVTKGFVSEAESGKRLAQVVAEPSLTKSGVYWSWNKDSASFENQLSQEASDPEKARKVWELSEKLVGLA.

Residues 1-74 constitute a chloroplast transit peptide; sequence MALQLLPSTL…KPSGKKTLRQ (74 aa).

The protein belongs to the short-chain dehydrogenases/reductases (SDR) family. POR subfamily.

The protein localises to the plastid. The protein resides in the chloroplast. The catalysed reaction is chlorophyllide a + NADP(+) = protochlorophyllide a + NADPH + H(+). It functions in the pathway porphyrin-containing compound metabolism; chlorophyll biosynthesis. Functionally, phototransformation of protochlorophyllide (Pchlide) to chlorophyllide (Chlide). The chain is Protochlorophyllide reductase A, chloroplastic (PORA) from Triticum aestivum (Wheat).